The chain runs to 391 residues: MGKNLLEQLRQFTVVVADTGDIQAIETFTPRDSTTNPSLITAAAQMPQYQEIVDSTLLKAKDEAGENASIKDIVRLAFDRLAVAFGLKILQIIPGRVSTEVDARLSYDTEATIAKARYLIGEYAKAGIDKKRILIKIASTWEGIKAAEVLEQEGIHCNLTLLFGLHQAIACAEAKVTLISPFVGRILDWYKKSTGKEYDSHEDPGVQSVTTIYNYYKRFGYKTEVMGASFRNIGEIIELAGCDLLTISPQLLDQLRNTEGDLPRKLDPATVPQDIEKIVMDKATFDKMHAEDPMASEKLAEGIAGFTKALEVLEHLLEERLKVLDGQEHIKHGAEEIFHAYDLDGDGFITREEWAGTDVVFDALDRDHDGKITAAEMSAGLGAAFRLASVG.

A transaldolase region spans residues 1 to 329; the sequence is MGKNLLEQLR…RLKVLDGQEH (329 aa). K136 serves as the catalytic Schiff-base intermediate with substrate. EF-hand domains are found at residues 329–364 and 365–387; these read HIKH…FDAL and DRDH…AFRL. Positions 342, 344, 346, 353, 365, 367, 369, 371, and 376 each coordinate Ca(2+).

Belongs to the transaldolase family. Type 1 subfamily.

Its subcellular location is the cytoplasm. The catalysed reaction is D-sedoheptulose 7-phosphate + D-glyceraldehyde 3-phosphate = D-erythrose 4-phosphate + beta-D-fructose 6-phosphate. It functions in the pathway carbohydrate degradation; pentose phosphate pathway; D-glyceraldehyde 3-phosphate and beta-D-fructose 6-phosphate from D-ribose 5-phosphate and D-xylulose 5-phosphate (non-oxidative stage): step 2/3. Functionally, transaldolase is important for the balance of metabolites in the pentose-phosphate pathway. In Synechocystis sp. (strain ATCC 27184 / PCC 6803 / Kazusa), this protein is Transaldolase.